The primary structure comprises 569 residues: Alpha-keto-acid decarboxylase (569 aa).

Position 57 (glutamate 57) interacts with thiamine diphosphate. A thiamine pyrophosphate binding region spans residues 392-474; it reads TAFYGMVEHR…VVVNNDGYTI (83 aa). Mg(2+)-binding residues include aspartate 442, asparagine 469, and glycine 471.

The protein belongs to the TPP enzyme family. A metal cation serves as cofactor. It depends on thiamine diphosphate as a cofactor.

Decarboxylates branched-chain and aromatic alpha-keto acids to aldehydes. This chain is Alpha-keto-acid decarboxylase (kdc), found in Mycobacterium leprae (strain TN).